Reading from the N-terminus, the 138-residue chain is MIQQTLAIIKPDATKRHLIGEILSYMEKNGLAIKALKMLHLTKEQTEGFYAEHQGKDFFDPLVAFMISEPIVVAVLEGENAVENYRLLMGATKPEERKLGTIRKMFGLGYRENAVHGSDSETSAKREIAYFFTPSEIV.

Positions 10, 58, 86, 92, 103, and 113 each coordinate ATP. Histidine 116 serves as the catalytic Pros-phosphohistidine intermediate.

This sequence belongs to the NDK family. As to quaternary structure, homotetramer. It depends on Mg(2+) as a cofactor.

The protein resides in the cytoplasm. The enzyme catalyses a 2'-deoxyribonucleoside 5'-diphosphate + ATP = a 2'-deoxyribonucleoside 5'-triphosphate + ADP. It carries out the reaction a ribonucleoside 5'-diphosphate + ATP = a ribonucleoside 5'-triphosphate + ADP. Functionally, major role in the synthesis of nucleoside triphosphates other than ATP. The ATP gamma phosphate is transferred to the NDP beta phosphate via a ping-pong mechanism, using a phosphorylated active-site intermediate. This Glaesserella parasuis serovar 5 (strain SH0165) (Haemophilus parasuis) protein is Nucleoside diphosphate kinase.